Here is a 130-residue protein sequence, read N- to C-terminus: Small ribosomal subunit protein uS11c (130 aa).

The protein belongs to the universal ribosomal protein uS11 family. As to quaternary structure, part of the 30S ribosomal subunit.

The protein resides in the plastid. It is found in the chloroplast. The protein is Small ribosomal subunit protein uS11c of Chlorokybus atmophyticus (Soil alga).